A 266-amino-acid chain; its full sequence is Putative carbamate hydrolase RutD (266 aa).

This sequence belongs to the AB hydrolase superfamily. Hydrolase RutD family.

It catalyses the reaction carbamate + 2 H(+) = NH4(+) + CO2. Its function is as follows. Involved in pyrimidine catabolism. May facilitate the hydrolysis of carbamate, a reaction that can also occur spontaneously. The sequence is that of Putative carbamate hydrolase RutD from Escherichia coli O7:K1 (strain IAI39 / ExPEC).